The primary structure comprises 388 residues: Glutamate 5-kinase (388 aa).

Position 21 (K21) interacts with ATP. Positions 61, 148, and 160 each coordinate substrate. Residues 180–181 (TD) and 222–228 (TGGMITK) contribute to the ATP site. Residues 285–363 (RGSVFLDPGA…RWLARELGAE (79 aa)) enclose the PUA domain.

It belongs to the glutamate 5-kinase family.

The protein resides in the cytoplasm. The catalysed reaction is L-glutamate + ATP = L-glutamyl 5-phosphate + ADP. It functions in the pathway amino-acid biosynthesis; L-proline biosynthesis; L-glutamate 5-semialdehyde from L-glutamate: step 1/2. Catalyzes the transfer of a phosphate group to glutamate to form L-glutamate 5-phosphate. The polypeptide is Glutamate 5-kinase (Thermobifida fusca (strain YX)).